The primary structure comprises 154 residues: Myoglobin (154 aa).

The Globin domain maps to 2-148 (ELSDQEWKHV…FRNDMASKYK (147 aa)). Residue histidine 65 coordinates nitrite. O2 is bound at residue histidine 65. A heme b-binding site is contributed by histidine 94.

Belongs to the globin family. Monomeric.

The protein resides in the cytoplasm. It localises to the sarcoplasm. It carries out the reaction Fe(III)-heme b-[protein] + nitric oxide + H2O = Fe(II)-heme b-[protein] + nitrite + 2 H(+). The enzyme catalyses H2O2 + AH2 = A + 2 H2O. Monomeric heme protein which primary function is to store oxygen and facilitate its diffusion within muscle tissues. Reversibly binds oxygen through a pentacoordinated heme iron and enables its timely and efficient release as needed during periods of heightened demand. Depending on the oxidative conditions of tissues and cells, and in addition to its ability to bind oxygen, it also has a nitrite reductase activity whereby it regulates the production of bioactive nitric oxide. Under stress conditions, like hypoxia and anoxia, it also protects cells against reactive oxygen species thanks to its pseudoperoxidase activity. The sequence is that of Myoglobin (MB) from Alligator mississippiensis (American alligator).